We begin with the raw amino-acid sequence, 388 residues long: Alanine racemase (388 aa).

Lys44 acts as the Proton acceptor; specific for D-alanine in catalysis. N6-(pyridoxal phosphate)lysine is present on Lys44. Arg142 contacts substrate. The Proton acceptor; specific for L-alanine role is filled by Tyr273. Met321 lines the substrate pocket.

This sequence belongs to the alanine racemase family. Pyridoxal 5'-phosphate serves as cofactor.

It carries out the reaction L-alanine = D-alanine. The protein operates within amino-acid biosynthesis; D-alanine biosynthesis; D-alanine from L-alanine: step 1/1. Catalyzes the interconversion of L-alanine and D-alanine. May also act on other amino acids. The polypeptide is Alanine racemase (alr) (Mycobacterium ulcerans (strain Agy99)).